The sequence spans 134 residues: ATP synthase epsilon chain (134 aa).

Belongs to the ATPase epsilon chain family. As to quaternary structure, F-type ATPases have 2 components, CF(1) - the catalytic core - and CF(0) - the membrane proton channel. CF(1) has five subunits: alpha(3), beta(3), gamma(1), delta(1), epsilon(1). CF(0) has three main subunits: a, b and c.

Its subcellular location is the cell membrane. Its function is as follows. Produces ATP from ADP in the presence of a proton gradient across the membrane. This Staphylococcus saprophyticus subsp. saprophyticus (strain ATCC 15305 / DSM 20229 / NCIMB 8711 / NCTC 7292 / S-41) protein is ATP synthase epsilon chain.